The sequence spans 230 residues: Type 4 apparatus protein DotY (230 aa).

Positions 202–230 (EPKALETKREEIRQEIESGAEAPTTQSIR) are disordered. Residues 204–217 (KALETKREEIRQEI) are compositionally biased toward basic and acidic residues.

In terms of assembly, the T4BSS is a complex nanomachine composed of several subcomplexes. This subunit is part of the Type IV Coupling Complex (T4CC), a subcomplex composed of the DotLMNYZ core and the IcmSW-LvgA adapter subunits, linked by the C-terminal tail of DotL. Six DotLMNYZ hetero-pentameric units may assemble into a hexameric nanomachine, forming an inner membrane channel for effectors to pass through. Interacts exclusively with DotZ. DotY and DotZ are co-dependent for the assembly into the T4CC.

The protein localises to the cytoplasm. Functionally, component of the Dot/Icm type IVB secretion system (T4BSS), which is used to inject bacterial effector proteins into eukaryotic host cells. Part of a subcomplex which recruits effector proteins and delivers them to the core transmembrane subcomplex. DotY and DotZ play a role in effector translocation, but are not essential and do not influence the stability of the subcomplex main components. The DotY/DotZ main function is to optimize secretion by modulating the delivery trajectory of the IcmSW module and the localization of the machinery to the poles. The protein is Type 4 apparatus protein DotY of Legionella pneumophila subsp. pneumophila (strain Philadelphia 1 / ATCC 33152 / DSM 7513).